The chain runs to 506 residues: Anaerobic nitric oxide reductase transcription regulator NorR (506 aa).

4-aspartylphosphate is present on Asp57. The Sigma-54 factor interaction domain maps to 187-416; the sequence is MIGLSPAMTQ…LEHAIHRAVV (230 aa). Residues 215 to 222 and 278 to 287 each bind ATP; these read GETGTGKE and ADNGTLFLDE. Positions 481 to 500 form a DNA-binding region, H-T-H motif; sequence WAASARALETDVANLHRLAK.

The protein operates within nitrogen metabolism; nitric oxide reduction. Required for the expression of anaerobic nitric oxide (NO) reductase, acts as a transcriptional activator for at least the norVW operon. Activation also requires sigma-54. This chain is Anaerobic nitric oxide reductase transcription regulator NorR, found in Salmonella choleraesuis (strain SC-B67).